The chain runs to 962 residues: MEDCNVHSAASILASVKEQEARFERLTRALEQERRHVALQLERAQQPGMVSGGMGSGQPLPMAWQQLVLQEQSPGSQASLATMPEAPDVLEETVTVEEDPGTPTSHVSIVTSEDGTTRRTETKVTKTVKTVTTRTVRQVPVGPDGLPLLDGGPPLGPFADGALDRHFLLRGGGPVATLSRAYLSSGGGFPEGPEPRDSPSYGSLSRGLGMRPPRAGPLGPGPGDGCFTLPGHREAFPVGPEPGPPGGRSLPERFQAEPYGLEDDTRSLAADDEGGPELEPDYGTATRRRPECGRGLHTRAYEDTADDGGELADERPAFPMVTAPLAQPERGSMGSLDRLVRRSPSVDSARKEPRWRDPELPEVLAMLRHPVDPVKANAAAYLQHLCFENEGVKRRVRQLRGLPLLVALLDHPRAEVRRRACGALRNLSYGRDTDNKAAIRDCGGVPALVRLLRAARDNEVRELVTGTLWNLSSYEPLKMVIIDHGLQTLTHEVIVPHSGWEREPNEDSKPRDAEWTTVFKNTSGCLRNVSSDGAEARRRLRECEGLVDALLHALQSAVGRKDTDNKSVENCVCIMRNLSYHVHKEVPGADRYQEAEPGPLGSAVGSQRRRRDDASCFGGKKAKEEWFHQGKKDGEMDRNFDTLDLPKRTEAAKGFELLYQPEVVRLYLSLLTESRNFNTLEAAAGALQNLSAGNWMWATYIRATVRKERGLPVLVELLQSETDKVVRAVAIALRNLSLDRRNKDLIGSYAMAELVRNVRNAQAPPRPGACLEEDTVVAVLNTIHEIVSDSLDNARSLLQARGVPALVALVASSQSVREAKAASHVLQTVWSYKELRGTLQKDGWTKARFQSAAATAKGPKGALSPGGFDDSTLPLVDKSLEGEKTGSRDVIPMDALGPDGYSTVDRRERRPRGASSAGEASEKEPLKLDPSRKAPPPGPSRPAVRLVDAVGDAKPQPVDSWV.

Residues 8–46 (SAASILASVKEQEARFERLTRALEQERRHVALQLERAQQ) adopt a coiled-coil conformation. Residues 95–122 (TVEEDPGTPTSHVSIVTSEDGTTRRTET) form a disordered region. Residues T102 and T104 each carry the phosphothreonine modification. Positions 102 to 114 (TPTSHVSIVTSED) are enriched in polar residues. R170 is modified (omega-N-methylarginine). Disordered regions lie at residues 186-253 (GGGF…LPER) and 266-290 (RSLA…RRRP). The segment covering 206 to 217 (RGLGMRPPRAGP) has biased composition (low complexity). The residue at position 267 (S267) is a Phosphoserine. The span at 270–280 (ADDEGGPELEP) shows a compositional bias: acidic residues. Phosphoserine occurs at positions 332, 335, 343, and 345. ARM repeat units follow at residues 348–387 (SARK…HLCF), 390–429 (EGVK…NLSY), 433–467 (TDNK…VTGT), 468–508 (LWNL…NEDS), 526–565 (LRNV…DTDN), and 575–622 (MRNL…GKKA). The disordered stretch occupies residues 590–614 (DRYQEAEPGPLGSAVGSQRRRRDDA). S606 carries the post-translational modification Phosphoserine. A Nuclear localization signal motif is present at residues 607–623 (QRRRRDDASCFGGKKAK). T642 is modified (phosphothreonine). 4 ARM repeats span residues 646 to 686 (PKRT…AAGA), 699 to 738 (TYIR…NLSL), 739 to 781 (DRRN…AVLN), and 782 to 826 (TIHE…SHVL). A required for interaction with RNA-binding proteins DDX5, HNRNPH2 and SRSF1 and with mRNAs region spans residues 776–962 (VVAVLNTIHE…AKPQPVDSWV (187 aa)). The disordered stretch occupies residues 854 to 962 (ATAKGPKGAL…AKPQPVDSWV (109 aa)). Phosphoserine occurs at positions 864 and 871. A Phosphothreonine modification is found at T872. Residues 878 to 887 (KSLEGEKTGS) show a composition bias toward basic and acidic residues. S915 carries the phosphoserine modification. The segment covering 920–932 (ASEKEPLKLDPSR) has biased composition (basic and acidic residues).

Belongs to the beta-catenin family. Component of a ribonucleoprotein complex containing mRNAs and RNA-binding proteins including DDX5, HNRNPH2 and SRSF1 as well as ARVCF. Interacts (via the extreme C-terminus) with FRMPD2 (via the PDZ 2 domain). Interacts with CCDC85B. Found in all the examined tissues including heart, brain, liver and kidney. Found at low level in lung. Expressed in dermal connective tissue, salivary gland duct and in the corneal layer (at protein level). Expressed in arrector pili muscle (at protein level). High levels detected in epithelial cells with lower levels found in fibroblasts and T lymphocytes.

The protein localises to the cell junction. Its subcellular location is the adherens junction. It is found in the nucleus. It localises to the cytoplasm. Functionally, contributes to the regulation of alternative splicing of pre-mRNAs. In Homo sapiens (Human), this protein is Splicing regulator ARVCF.